Reading from the N-terminus, the 462-residue chain is tRNA modification GTPase MnmE (462 aa).

Residues Arg-27, Glu-89, and Arg-128 each coordinate (6S)-5-formyl-5,6,7,8-tetrahydrofolate. The region spanning 223–383 (GLKIAIVGRP…LEAAILAAVG (161 aa)) is the TrmE-type G domain. GTP-binding positions include 233 to 238 (NVGKSS), 252 to 258 (TDLPGRT), and 277 to 280 (DTAG). The Mg(2+) site is built by Ser-237 and Thr-258. Lys-462 is a binding site for (6S)-5-formyl-5,6,7,8-tetrahydrofolate.

This sequence belongs to the TRAFAC class TrmE-Era-EngA-EngB-Septin-like GTPase superfamily. TrmE GTPase family. Homodimer. Heterotetramer of two MnmE and two MnmG subunits. The cofactor is K(+).

The protein resides in the cytoplasm. Functionally, exhibits a very high intrinsic GTPase hydrolysis rate. Involved in the addition of a carboxymethylaminomethyl (cmnm) group at the wobble position (U34) of certain tRNAs, forming tRNA-cmnm(5)s(2)U34. The polypeptide is tRNA modification GTPase MnmE (Synechococcus sp. (strain ATCC 27144 / PCC 6301 / SAUG 1402/1) (Anacystis nidulans)).